Here is a 1333-residue protein sequence, read N- to C-terminus: Protein grainyhead (1333 aa).

Disordered stretches follow at residues 52–93, 439–598, 617–655, 727–784, and 853–885; these read SLSP…DSPQ, LLGS…PGAR, QTSH…GPYI, RFAG…GGAT, and TAVH…DFGR. Positions 59–68 are enriched in gly residues; the sequence is GSGGHSGGGN. A compositionally biased stretch (low complexity) spans 445–488; it reads SSSATVSTTGVVSTTTISHHQQQQQQQQQQQQQQQQQHQQQQQH. Residues 520 to 532 are compositionally biased toward basic and acidic residues; the sequence is IKREPEDLRKDPK. 2 stretches are compositionally biased toward low complexity: residues 533–546 and 567–596; these read NGNI…NGPG and PSTP…GSPG. Residues 626 to 642 are compositionally biased toward gly residues; it reads GAGGGAGPAGAAGGGGV. Low complexity predominate over residues 749–772; the sequence is QQQQQQQQHQQQQQQQQHHQQQQH. Over residues 853–877 the composition is skewed to polar residues; it reads TAVHGSQNSPTTSLVDTSTNGSTRS. The Grh/CP2 DB domain occupies 899 to 1125; the sequence is TNVGFRYHLE…DFAKPPVLFS (227 aa).

Belongs to the grh/CP2 family. Grainyhead subfamily. Restricted, during embryogenesis, to tissues derived from ectoderm, predominantly the central nervous system (CNS) and the epidermis.

Its subcellular location is the nucleus. Its function is as follows. Transcription factor that binds a CNS-specific regulatory element of the Dopa decarboxylase (Ddc) gene. Also interacts with sequences adjacent to other transcription units, including Ultrabithorax (Ubx) and engrailed (en). Activity in vivo may be required only at high levels transiently to activate the expression of Ddc in the CNS. The protein is Protein grainyhead (grh) of Drosophila melanogaster (Fruit fly).